We begin with the raw amino-acid sequence, 182 residues long: Crossover junction endodeoxyribonuclease RuvC (182 aa).

Residues aspartate 7, glutamate 67, and aspartate 139 contribute to the active site. Residues aspartate 7, glutamate 67, and aspartate 139 each contribute to the Mg(2+) site.

It belongs to the RuvC family. In terms of assembly, homodimer which binds Holliday junction (HJ) DNA. The HJ becomes 2-fold symmetrical on binding to RuvC with unstacked arms; it has a different conformation from HJ DNA in complex with RuvA. In the full resolvosome a probable DNA-RuvA(4)-RuvB(12)-RuvC(2) complex forms which resolves the HJ. It depends on Mg(2+) as a cofactor.

The protein localises to the cytoplasm. The enzyme catalyses Endonucleolytic cleavage at a junction such as a reciprocal single-stranded crossover between two homologous DNA duplexes (Holliday junction).. Functionally, the RuvA-RuvB-RuvC complex processes Holliday junction (HJ) DNA during genetic recombination and DNA repair. Endonuclease that resolves HJ intermediates. Cleaves cruciform DNA by making single-stranded nicks across the HJ at symmetrical positions within the homologous arms, yielding a 5'-phosphate and a 3'-hydroxyl group; requires a central core of homology in the junction. The consensus cleavage sequence is 5'-(A/T)TT(C/G)-3'. Cleavage occurs on the 3'-side of the TT dinucleotide at the point of strand exchange. HJ branch migration catalyzed by RuvA-RuvB allows RuvC to scan DNA until it finds its consensus sequence, where it cleaves and resolves the cruciform DNA. The polypeptide is Crossover junction endodeoxyribonuclease RuvC (Bordetella petrii (strain ATCC BAA-461 / DSM 12804 / CCUG 43448)).